We begin with the raw amino-acid sequence, 289 residues long: Zinc finger matrin-type protein 3 (289 aa).

Matrin-type zinc fingers lie at residues 70 to 100 (LFCK…KLRN) and 147 to 177 (DYCK…RLRL). Disordered stretches follow at residues 180–202 (AQSH…EGSE) and 265–289 (ESKQ…GYVQ). A Matrin-type 3 zinc finger spans residues 245–275 (FYCSMCNVGAGEEVEFRQHLESKQHKSKVSE). The segment covering 265–282 (ESKQHKSKVSEQRYRSEM) has biased composition (basic and acidic residues).

Interacts with dsRNA. As to expression, highly expressed in brain, gut, lung, and testis.

It is found in the nucleus. The protein resides in the nucleolus. Its function is as follows. Acts as a bona fide target gene of p53/TP53. May play a role in the TP53-dependent growth regulatory pathway. May contribute to TP53-mediated apoptosis by regulation of TP53 expression and translocation to the nucleus and nucleolus. In Rattus norvegicus (Rat), this protein is Zinc finger matrin-type protein 3.